Reading from the N-terminus, the 139-residue chain is Putative pre-16S rRNA nuclease (139 aa).

It belongs to the YqgF nuclease family.

The protein localises to the cytoplasm. In terms of biological role, could be a nuclease involved in processing of the 5'-end of pre-16S rRNA. The sequence is that of Putative pre-16S rRNA nuclease from Streptococcus equi subsp. equi (strain 4047).